Reading from the N-terminus, the 168-residue chain is Small ribosomal subunit protein uS5 (168 aa).

In terms of domain architecture, S5 DRBM spans 11-74; the sequence is YSEKVVKIDR…ESAKKHLVKI (64 aa).

Belongs to the universal ribosomal protein uS5 family. As to quaternary structure, part of the 30S ribosomal subunit. Contacts proteins S4 and S8.

With S4 and S12 plays an important role in translational accuracy. Its function is as follows. Located at the back of the 30S subunit body where it stabilizes the conformation of the head with respect to the body. In Leptospira interrogans serogroup Icterohaemorrhagiae serovar copenhageni (strain Fiocruz L1-130), this protein is Small ribosomal subunit protein uS5.